Here is a 237-residue protein sequence, read N- to C-terminus: Putative N-acetylmannosamine-6-phosphate 2-epimerase (237 aa).

This sequence belongs to the NanE family.

It catalyses the reaction an N-acyl-D-glucosamine 6-phosphate = an N-acyl-D-mannosamine 6-phosphate. It functions in the pathway amino-sugar metabolism; N-acetylneuraminate degradation; D-fructose 6-phosphate from N-acetylneuraminate: step 3/5. Functionally, converts N-acetylmannosamine-6-phosphate (ManNAc-6-P) to N-acetylglucosamine-6-phosphate (GlcNAc-6-P). This Listeria monocytogenes serotype 4a (strain HCC23) protein is Putative N-acetylmannosamine-6-phosphate 2-epimerase.